A 446-amino-acid chain; its full sequence is Peroxisomal biogenesis factor 3 (446 aa).

Topologically, residues 1 to 12 are peroxisomal; that stretch reads MARTGLQRHRGK. A helical transmembrane segment spans residues 13-33; sequence LLGTGAVLGGLVVAGVVAAVA. Topologically, residues 34–446 are cytoplasmic; it reads AKRWVRRQQQ…SASVYSNFGV (413 aa). The segment at 101 to 122 is disordered; sequence RAGEDDEQGSGGHASAGEGSVS.

It belongs to the peroxin-3 family.

It is found in the peroxisome membrane. Functionally, involved in peroxisome biosynthesis. This is Peroxisomal biogenesis factor 3 (PEX3) from Eremothecium gossypii (strain ATCC 10895 / CBS 109.51 / FGSC 9923 / NRRL Y-1056) (Yeast).